The sequence spans 172 residues: Lipopolysaccharide export system protein LptA (172 aa).

A signal peptide spans 1–23 (MKLVSNKILFLATMVLASSSAFA).

Belongs to the LptA family. As to quaternary structure, component of the lipopolysaccharide transport and assembly complex.

The protein localises to the periplasm. Its function is as follows. Involved in the assembly of lipopolysaccharide (LPS). Required for the translocation of LPS from the inner membrane to the outer membrane. May form a bridge between the inner membrane and the outer membrane, via interactions with LptC and LptD, thereby facilitating LPS transfer across the periplasm. This chain is Lipopolysaccharide export system protein LptA, found in Haemophilus influenzae (strain ATCC 51907 / DSM 11121 / KW20 / Rd).